An 85-amino-acid polypeptide reads, in one-letter code: U4-theraphotoxin-Hhn1u (85 aa).

Positions 1–22 (MKMTLIAILTCAAVLVLHTTAA) are cleaved as a signal peptide. Residues 23-48 (EELEAESQLMEVGMPDTELEAVDEER) constitute a propeptide that is removed on maturation. 3 cysteine pairs are disulfide-bonded: C52–C66, C56–C77, and C71–C82.

It belongs to the neurotoxin 12 (Hwtx-2) family. 02 (Hwtx-2) subfamily. In terms of tissue distribution, expressed by the venom gland.

It is found in the secreted. In terms of biological role, postsynaptic neurotoxin. The sequence is that of U4-theraphotoxin-Hhn1u from Cyriopagopus hainanus (Chinese bird spider).